The sequence spans 155 residues: 6,7-dimethyl-8-ribityllumazine synthase (155 aa).

Residues F24, 58-60 (AFE), and 82-84 (AII) contribute to the 5-amino-6-(D-ribitylamino)uracil site. A (2S)-2-hydroxy-3-oxobutyl phosphate-binding site is contributed by 87 to 88 (AT). H90 serves as the catalytic Proton donor. Position 115 (F115) interacts with 5-amino-6-(D-ribitylamino)uracil. Position 129 (R129) interacts with (2S)-2-hydroxy-3-oxobutyl phosphate.

The protein belongs to the DMRL synthase family.

It carries out the reaction (2S)-2-hydroxy-3-oxobutyl phosphate + 5-amino-6-(D-ribitylamino)uracil = 6,7-dimethyl-8-(1-D-ribityl)lumazine + phosphate + 2 H2O + H(+). Its pathway is cofactor biosynthesis; riboflavin biosynthesis; riboflavin from 2-hydroxy-3-oxobutyl phosphate and 5-amino-6-(D-ribitylamino)uracil: step 1/2. In terms of biological role, catalyzes the formation of 6,7-dimethyl-8-ribityllumazine by condensation of 5-amino-6-(D-ribitylamino)uracil with 3,4-dihydroxy-2-butanone 4-phosphate. This is the penultimate step in the biosynthesis of riboflavin. The sequence is that of 6,7-dimethyl-8-ribityllumazine synthase from Prosthecochloris aestuarii (strain DSM 271 / SK 413).